Here is a 201-residue protein sequence, read N- to C-terminus: 3-isopropylmalate dehydratase small subunit (201 aa).

The protein belongs to the LeuD family. LeuD type 1 subfamily. In terms of assembly, heterodimer of LeuC and LeuD.

The catalysed reaction is (2R,3S)-3-isopropylmalate = (2S)-2-isopropylmalate. It functions in the pathway amino-acid biosynthesis; L-leucine biosynthesis; L-leucine from 3-methyl-2-oxobutanoate: step 2/4. Its function is as follows. Catalyzes the isomerization between 2-isopropylmalate and 3-isopropylmalate, via the formation of 2-isopropylmaleate. The chain is 3-isopropylmalate dehydratase small subunit from Thermus thermophilus (strain ATCC BAA-163 / DSM 7039 / HB27).